We begin with the raw amino-acid sequence, 860 residues long: Leucine--tRNA ligase (860 aa).

Residues 42 to 52 (PYPSGRLHMGH) carry the 'HIGH' region motif. The 'KMSKS' region motif lies at 619-623 (KMSKS). Lys-622 is an ATP binding site.

Belongs to the class-I aminoacyl-tRNA synthetase family.

The protein resides in the cytoplasm. It catalyses the reaction tRNA(Leu) + L-leucine + ATP = L-leucyl-tRNA(Leu) + AMP + diphosphate. This is Leucine--tRNA ligase from Escherichia coli O127:H6 (strain E2348/69 / EPEC).